Reading from the N-terminus, the 1310-residue chain is Rho family-interacting cell polarization regulator 2 (1310 aa).

Residues S123 and S178 each carry the phosphoserine modification. An involved in cell filopodia formation region spans residues 196–254 (MHNLGHKNTNTPKEPQPKRVEEVYRALKNGLDEYLEFHQTELDKLTAQLKDMKRNSRLG). A coiled-coil region spans residues 224–253 (NGLDEYLEFHQTELDKLTAQLKDMKRNSRL). The residue at position 508 (S508) is a Phosphoserine. Residues 588 to 608 (SSLSSQNEGTEDSSSASSRNS) are compositionally biased toward polar residues. The disordered stretch occupies residues 588 to 639 (SSLSSQNEGTEDSSSASSRNSLGEDHEPKSHSKSDTVEPKKPSVDARSGTES). The segment covering 609–631 (LGEDHEPKSHSKSDTVEPKKPSV) has biased composition (basic and acidic residues). S682 is modified (phosphoserine).

This sequence belongs to the RIPOR family. Homooligomer; homooligomerization is regulated by RHOC and leads to the formation of concatemers through the association of N- and C-termini. Interacts (phosphorylated form) with 14-3-3 proteins; these interactions occur during myogenic cell differentiation and also induces T cell proliferation arrest. Interacts (phosphorylated form) with HDAC6; this interaction occurs during early myogenic differentiation, prevents HDAC6 to deacetylate tubulin and also induces T cell proliferation arrest. Interacts with DYSF; this interaction occurs during early myogenic differentiation. Interacts with MYOF. Interacts (via active GTP- or inactive GDP-bound forms) with RHOA; this interaction is direct, blocks the loading of GTP to RHOA and decreases upon chemokine CCL19 stimulation in primary T lymphocytes. Interacts with RHOC. Interacts (via phosphorylated form) with YWHAB; this interaction occurs in a chemokine-dependent manner and does not compete for binding of RIPOR2 with RHOA nor blocks inhibition of RIPOR2-mediated RHOA activity. Interacts with YWHAE. Interacts with YWHAQ. Phosphorylated. Chemokine-induced phosphorylation in neutrophils occurs in a PKC- and AKT-dependent manner, resulting in RIPOR2 interaction with YWHAB and stabilization. Phosphorylated by PKCA, AKT1 and MAPKAPK1A; in vitro. In terms of tissue distribution, expressed in the cochlea (at protein level).

Its subcellular location is the cytoplasm. The protein localises to the cytoskeleton. The protein resides in the cell projection. It localises to the filopodium. It is found in the apical cell membrane. Its subcellular location is the stereocilium. The protein localises to the stereocilium membrane. In terms of biological role, acts as an inhibitor of the small GTPase RHOA and plays several roles in the regulation of myoblast and hair cell differentiation, lymphocyte T proliferation and neutrophil polarization. Plays a role in fetal mononuclear myoblast differentiation by promoting filopodia and myotube formation. Maintains naive T lymphocytes in a quiescent state and prevents chemokine-induced T lymphocyte responses, such as cell adhesion, polarization and migration. Involved also in the regulation of neutrophil polarization, chemotaxis and adhesion. Required for normal development of inner and outer hair cell stereocilia within the cochlea of the inner ear. Plays a role for maintaining the structural organization of the basal domain of stereocilia. Involved in mechanosensory hair cell function. Required for normal hearing. The sequence is that of Rho family-interacting cell polarization regulator 2 from Rattus norvegicus (Rat).